Consider the following 463-residue polypeptide: ATP synthase subunit beta (463 aa).

152-159 (GGAGVGKT) contributes to the ATP binding site.

The protein belongs to the ATPase alpha/beta chains family. In terms of assembly, F-type ATPases have 2 components, CF(1) - the catalytic core - and CF(0) - the membrane proton channel. CF(1) has five subunits: alpha(3), beta(3), gamma(1), delta(1), epsilon(1). CF(0) has three main subunits: a(1), b(2) and c(9-12). The alpha and beta chains form an alternating ring which encloses part of the gamma chain. CF(1) is attached to CF(0) by a central stalk formed by the gamma and epsilon chains, while a peripheral stalk is formed by the delta and b chains.

It localises to the cell inner membrane. The catalysed reaction is ATP + H2O + 4 H(+)(in) = ADP + phosphate + 5 H(+)(out). In terms of biological role, produces ATP from ADP in the presence of a proton gradient across the membrane. The catalytic sites are hosted primarily by the beta subunits. The sequence is that of ATP synthase subunit beta from Shewanella oneidensis (strain ATCC 700550 / JCM 31522 / CIP 106686 / LMG 19005 / NCIMB 14063 / MR-1).